The chain runs to 186 residues: Cytochrome b6-f complex iron-sulfur subunit (186 aa).

Residues Leu16–Leu38 form a helical membrane-spanning segment. The Rieske domain maps to Gly74–Ile163. The [2Fe-2S] cluster site is built by Cys109, His111, Cys127, and His130. A disulfide bridge links Cys114 with Cys129.

It belongs to the Rieske iron-sulfur protein family. The 4 large subunits of the cytochrome b6-f complex are cytochrome b6, subunit IV (17 kDa polypeptide, PetD), cytochrome f and the Rieske protein, while the 4 small subunits are PetG, PetL, PetM and PetN. The complex functions as a dimer. [2Fe-2S] cluster serves as cofactor.

It is found in the cell inner membrane. The enzyme catalyses 2 oxidized [plastocyanin] + a plastoquinol + 2 H(+)(in) = 2 reduced [plastocyanin] + a plastoquinone + 4 H(+)(out). In terms of biological role, component of the cytochrome b6-f complex, which mediates electron transfer between photosystem II (PSII) and photosystem I (PSI), cyclic electron flow around PSI, and state transitions. This chain is Cytochrome b6-f complex iron-sulfur subunit, found in Gloeobacter violaceus (strain ATCC 29082 / PCC 7421).